Here is a 24-residue protein sequence, read N- to C-terminus: Flavin reductase (NADPH) (24 aa).

Positions 9, 11, 12, and 14 each coordinate NADP(+).

It belongs to the BLVRB family. In terms of assembly, monomer. In terms of tissue distribution, detected in erythrocytes (at protein level).

Its subcellular location is the cytoplasm. The enzyme catalyses reduced riboflavin + NADP(+) = riboflavin + NADPH + 2 H(+). It carries out the reaction bilirubin IXbeta + NADP(+) = biliverdin IXbeta + NADPH + H(+). It catalyses the reaction FMNH2 + NAD(+) = FMN + NADH + 2 H(+). The catalysed reaction is FMNH2 + NADP(+) = FMN + NADPH + 2 H(+). The enzyme catalyses S-nitroso-CoA + L-cysteinyl-[protein] = S-nitroso-L-cysteinyl-[protein] + CoA. It carries out the reaction L-cysteinyl-[SCAN] + S-nitroso-CoA = S-nitroso-L-cysteinyl-[SCAN] + CoA. It catalyses the reaction S-nitroso-L-cysteinyl-[SCAN] + L-cysteinyl-[protein] = L-cysteinyl-[SCAN] + S-nitroso-L-cysteinyl-[protein]. Functionally, enzyme that can both act as a NAD(P)H-dependent reductase and a S-nitroso-CoA-dependent nitrosyltransferase. Promotes fetal heme degradation during development. Also expressed in adult tissues, where it acts as a regulator of hematopoiesis, intermediary metabolism (glutaminolysis, glycolysis, TCA cycle and pentose phosphate pathway) and insulin signaling. Has a broad specificity oxidoreductase activity by catalyzing the NAD(P)H-dependent reduction of a variety of flavins, such as riboflavin, FAD or FMN, biliverdins, methemoglobin and PQQ (pyrroloquinoline quinone). Contributes to fetal heme catabolism by catalyzing reduction of biliverdin IXbeta into bilirubin IXbeta in the liver. Biliverdin IXbeta, which constitutes the major heme catabolite in the fetus is not present in adult. Does not reduce bilirubin IXalpha. Can also reduce the complexed Fe(3+) iron to Fe(2+) in the presence of FMN and NADPH. Acts as a protein nitrosyltransferase by catalyzing nitrosylation of cysteine residues of target proteins, such as HMOX2, INSR and IRS1. S-nitroso-CoA-dependent nitrosyltransferase activity is mediated via a 'ping-pong' mechanism: BLVRB first associates with both S-nitroso-CoA and protein substrate, nitric oxide group is then transferred from S-nitroso-CoA to Cys residues of BLVRB and from S-nitroso-BLVRB to the protein substrate. Inhibits insulin signaling by mediating nitrosylation of INSR and IRS1, leading to their inhibition. In Aquarana catesbeiana (American bullfrog), this protein is Flavin reductase (NADPH) (BLVRB).